Reading from the N-terminus, the 483-residue chain is ATP synthase subunit beta (483 aa).

ATP is bound at residue 169–176 (GGAGVGKT).

This sequence belongs to the ATPase alpha/beta chains family. In terms of assembly, F-type ATPases have 2 components, CF(1) - the catalytic core - and CF(0) - the membrane proton channel. CF(1) has five subunits: alpha(3), beta(3), gamma(1), delta(1), epsilon(1). CF(0) has three main subunits: a(1), b(2) and c(9-12). The alpha and beta chains form an alternating ring which encloses part of the gamma chain. CF(1) is attached to CF(0) by a central stalk formed by the gamma and epsilon chains, while a peripheral stalk is formed by the delta and b chains.

It localises to the cell membrane. It carries out the reaction ATP + H2O + 4 H(+)(in) = ADP + phosphate + 5 H(+)(out). Produces ATP from ADP in the presence of a proton gradient across the membrane. The catalytic sites are hosted primarily by the beta subunits. This Corynebacterium glutamicum (strain ATCC 13032 / DSM 20300 / JCM 1318 / BCRC 11384 / CCUG 27702 / LMG 3730 / NBRC 12168 / NCIMB 10025 / NRRL B-2784 / 534) protein is ATP synthase subunit beta.